Consider the following 232-residue polypeptide: Thiamine import ATP-binding protein ThiQ (232 aa).

The region spanning 2–230 is the ABC transporter domain; that stretch reads LKLTDITWLY…KASASAILGI (229 aa). ATP is bound at residue 32-39; that stretch reads GPSGAGKS.

This sequence belongs to the ABC transporter superfamily. Thiamine importer (TC 3.A.1.19.1) family. In terms of assembly, the complex is composed of two ATP-binding proteins (ThiQ), two transmembrane proteins (ThiP) and a solute-binding protein (ThiB).

The protein resides in the cell inner membrane. The enzyme catalyses thiamine(out) + ATP + H2O = thiamine(in) + ADP + phosphate + H(+). In terms of biological role, part of the ABC transporter complex ThiBPQ involved in thiamine import. Responsible for energy coupling to the transport system. The protein is Thiamine import ATP-binding protein ThiQ of Shigella flexneri serotype 5b (strain 8401).